We begin with the raw amino-acid sequence, 341 residues long: Cyclin-Y (341 aa).

A lipid anchor (N-myristoyl glycine) is attached at G2. Phosphoserine is present on residues S21 and S25. Phosphothreonine is present on T30. S33 is subject to Phosphoserine. The residue at position 37 (T37) is a Phosphothreonine. Phosphothreonine; by CDK14 is present on T67. Phosphoserine; by CDK14 is present on residues S71 and S73. T75 carries the post-translational modification Phosphothreonine. The residue at position 83 (S83) is a Phosphoserine; by CDK14. Phosphoserine occurs at positions 99, 100, and 102. Residues 143-265 (DIFDENLHPL…FLELLQFNIN (123 aa)) form the Cyclin N-terminal domain. Position 280 is a phosphoserine (S280). Residues S288 and S295 each carry the phosphoserine; by CDK14 modification. 2 positions are modified to phosphoserine: S324 and S326. A Phosphothreonine modification is found at T331.

Belongs to the cyclin family. Cyclin Y subfamily. Found in a complex with CAPRIN2, LRP6 and CDK14 during G2/M stage; CAPRIN2 functions as a scaffold for the complex by binding to CCNY via its N terminus and to CDK14 via its C terminus. Interacts with CDK14. Interacts with CDK16. Interacts with LRP6. Post-translationally, ubiquitinated; leading to its degradation. Heavily phosphorylated. Phosphorylation at Ser-71 and Ser-73 by CDK14 is enhanced during the G2 and M cell cycle phases, and creates a phosphodegron triggering SCF-dependent ubiquitination. In terms of tissue distribution, widely expressed.

Its subcellular location is the cell membrane. The protein localises to the nucleus. In terms of biological role, positive regulatory subunit of the cyclin-dependent kinases CDK14/PFTK1 and CDK16. Acts as a cell-cycle regulator of Wnt signaling pathway during G2/M phase by recruiting CDK14/PFTK1 to the plasma membrane and promoting phosphorylation of LRP6, leading to the activation of the Wnt signaling pathway. Recruits CDK16 to the plasma membrane. Isoform 3 might play a role in the activation of MYC-mediated transcription. In Homo sapiens (Human), this protein is Cyclin-Y (CCNY).